The chain runs to 2104 residues: Replication polyprotein (2104 aa).

The next 2 membrane-spanning stretches (helical) occupy residues 23 to 43 (LVAS…FASS) and 70 to 90 (FNPF…YAFI). Positions 289 to 313 (VRVGEIREKVATLRNKLNTLQTKEL) form a coiled coil. The SF3 helicase domain occupies 329–501 (LEVLLIEVKV…NKMPKRGAID (173 aa)). The segment at 1499-1520 (GDCGSPIVLASGKKAGKLIGFH) is viral peptidase. The RdRp catalytic domain occupies 1838–1965 (PNYFDADYKN…SVSDEYKDKY (128 aa)).

Post-translationally, specific enzymatic cleavages in vivo yield mature proteins.

The protein localises to the membrane. The enzyme catalyses RNA(n) + a ribonucleoside 5'-triphosphate = RNA(n+1) + diphosphate. Functionally, the peptidase activity is involved in polyprotein maturation, possibly along with hosts proteases. Transmembrane protein may be surface viral glycoprotein. RNA-directed RNA polymerase replicates the viral genome. The polypeptide is Replication polyprotein (Drosophila melanogaster (Fruit fly)).